Consider the following 190-residue polypeptide: FMRFamide-related peptides (190 aa).

A signal peptide spans 1 to 21 (MSCSRTVALLAALWLVVGATS). Residues 22–33 (SPVRRSPDLEAR) constitute a propeptide that is removed on maturation. Phe45 carries the phenylalanine amide modification. Residues 69 to 104 (GNSFLRFGRSQPLTLSTDDLVSLLRAYEEDYDTPMT) constitute a propeptide that is removed on maturation. Phe113 carries the post-translational modification Phenylalanine amide. The propeptide occupies 116–150 (DPNFIRLGRSADDDKSAFEQNSELVVSGYPQRKSR). Leu158 carries the leucine amide modification. Positions 160–190 (RDSEEVNENEFEETEESRRKRSADSCHDCQS) are excised as a propeptide. Residues 161–190 (DSEEVNENEFEETEESRRKRSADSCHDCQS) form a disordered region. The segment covering 164–174 (EVNENEFEETE) has biased composition (acidic residues). Residues 175-190 (ESRRKRSADSCHDCQS) show a composition bias toward basic and acidic residues.

Belongs to the FARP (FMRFamide related peptide) family. RFamide 1: Expressed in corpora cardiaca (CC), corpora allata (CA), antennal lobe (AL) and gnathal ganglion (GNG) (at protein level). Expression in AL detected in most animals, in CC, CA and in GNG in some animals (at protein level). RFamide precursor-related peptide 2: Expressed in corpora cardiaca (CC), corpora allata (CA), antennal lobe (AL) and gnathal ganglion (GNG) (at protein level). Expression in AL detected in some animals, expression in CC, CA and GNG in few animals (at protein level). RFamide 3: Expressed in corpora cardiaca (CC), corpora allata (CA), antennal lobe (AL) and gnathal ganglion (GNG) (at protein level). Expression in AL detected in all animals, in CC, CA and GNG in most animals (at protein level). RFamide 5: Expressed in corpora cardiaca (CC), corpora allata (CA), antennal lobe (AL) and gnathal ganglion (GNG) (at protein level). Expression in AL detected in all animals, in CC, CA and in GNG in some animals (at protein level).

It localises to the secreted. In insects, FMRFamide and related peptides have modulatory actions at skeletal neuromuscular junctions, and peptides that are immunologically related to FMRFamide are released into the circulation from neurohemal organs. The sequence is that of FMRFamide-related peptides from Agrotis ipsilon (Black cutworm moth).